Here is a 131-residue protein sequence, read N- to C-terminus: Ribonuclease P protein component (131 aa).

It belongs to the RnpA family. Consists of a catalytic RNA component (M1 or rnpB) and a protein subunit.

It carries out the reaction Endonucleolytic cleavage of RNA, removing 5'-extranucleotides from tRNA precursor.. RNaseP catalyzes the removal of the 5'-leader sequence from pre-tRNA to produce the mature 5'-terminus. It can also cleave other RNA substrates such as 4.5S RNA. The protein component plays an auxiliary but essential role in vivo by binding to the 5'-leader sequence and broadening the substrate specificity of the ribozyme. The sequence is that of Ribonuclease P protein component from Cyanothece sp. (strain PCC 7425 / ATCC 29141).